The primary structure comprises 298 residues: Acetylglutamate kinase (298 aa).

Residues 69-70 (GG), arginine 91, and asparagine 191 each bind substrate.

This sequence belongs to the acetylglutamate kinase family. ArgB subfamily.

It localises to the cytoplasm. It catalyses the reaction N-acetyl-L-glutamate + ATP = N-acetyl-L-glutamyl 5-phosphate + ADP. The protein operates within amino-acid biosynthesis; L-arginine biosynthesis; N(2)-acetyl-L-ornithine from L-glutamate: step 2/4. Catalyzes the ATP-dependent phosphorylation of N-acetyl-L-glutamate. In Neisseria meningitidis serogroup A / serotype 4A (strain DSM 15465 / Z2491), this protein is Acetylglutamate kinase.